A 707-amino-acid polypeptide reads, in one-letter code: Lipase maturation factor 2 (707 aa).

10 consecutive transmembrane segments (helical) span residues 10–30 (LFLQ…YTQI), 78–98 (LELL…LSPL), 102–122 (VIYL…QVFL), 123–143 (YFQW…VAPL), 165–185 (DLPF…SGVV), 227–247 (LSVV…FAPI), 259–279 (VLLQ…LMTL), 310–330 (ALLA…LAYG), 364–384 (LTLP…LSAL), and 399–419 (AVVQ…ISLV). N-linked (GlcNAc...) asparagine glycosylation is found at N489 and N616. The helical transmembrane segment at 637–657 (ALLWGLLMAVGAVRFVQALLA) threads the bilayer. Residues 665-707 (PLAPVSGEKRRPASQKDSGAASEQATAAPNPCSSSSRTTRRKK) form a disordered region. The span at 679-691 (QKDSGAASEQATA) shows a compositional bias: polar residues.

The protein belongs to the lipase maturation factor family.

The protein resides in the endoplasmic reticulum membrane. Functionally, involved in the maturation of specific proteins in the endoplasmic reticulum. May be required for maturation and transport of active lipoprotein lipase (LPL) through the secretory pathway. The sequence is that of Lipase maturation factor 2 (LMF2) from Homo sapiens (Human).